The primary structure comprises 37 residues: Mating pheromone Er-22 (37 aa).

Cystine bridges form between C3/C18, C10/C32, and C15/C24.

The protein resides in the secreted. Functionally, mating ciliate pheromones (or gamones) are diffusible extracellular communication signals that distinguish different intraspecific classes of cells commonly referred to as 'mating types'. They prepare the latter for conjugation by changing their cell surface properties. This is Mating pheromone Er-22 (MAT22) from Euplotes raikovi.